The chain runs to 323 residues: tRNA dimethylallyltransferase (323 aa).

Residue 12-19 participates in ATP binding; that stretch reads GPTAAGKT. 14 to 19 provides a ligand contact to substrate; it reads TAAGKT. 2 interaction with substrate tRNA regions span residues 37–40 and 161–165; these read DSAL and QRLIR.

This sequence belongs to the IPP transferase family. As to quaternary structure, monomer. Requires Mg(2+) as cofactor.

The catalysed reaction is adenosine(37) in tRNA + dimethylallyl diphosphate = N(6)-dimethylallyladenosine(37) in tRNA + diphosphate. In terms of biological role, catalyzes the transfer of a dimethylallyl group onto the adenine at position 37 in tRNAs that read codons beginning with uridine, leading to the formation of N6-(dimethylallyl)adenosine (i(6)A). This Pseudomonas putida (strain W619) protein is tRNA dimethylallyltransferase.